A 154-amino-acid polypeptide reads, in one-letter code: Large ribosomal subunit protein bL17 (154 aa).

The segment at 125 to 154 (AASQKSSKQDRAKRVQGSKKNVDAVAESAE) is disordered.

It belongs to the bacterial ribosomal protein bL17 family. Part of the 50S ribosomal subunit. Contacts protein L32.

In Chlorobium chlorochromatii (strain CaD3), this protein is Large ribosomal subunit protein bL17.